Here is a 504-residue protein sequence, read N- to C-terminus: Glutamate--tRNA ligase (504 aa).

Residues 9 to 19 (PSPTGDPHVGT) carry the 'HIGH' region motif. The short motif at 248–252 (KISKR) is the 'KMSKS' region element. Lysine 251 is a binding site for ATP.

This sequence belongs to the class-I aminoacyl-tRNA synthetase family. Glutamate--tRNA ligase type 1 subfamily. As to quaternary structure, monomer.

It is found in the cytoplasm. The catalysed reaction is tRNA(Glu) + L-glutamate + ATP = L-glutamyl-tRNA(Glu) + AMP + diphosphate. Its function is as follows. Catalyzes the attachment of glutamate to tRNA(Glu) in a two-step reaction: glutamate is first activated by ATP to form Glu-AMP and then transferred to the acceptor end of tRNA(Glu). This is Glutamate--tRNA ligase from Acidothermus cellulolyticus (strain ATCC 43068 / DSM 8971 / 11B).